Reading from the N-terminus, the 874-residue chain is Alanine--tRNA ligase (874 aa).

Residues His562, His566, Cys663, and His667 each coordinate Zn(2+).

This sequence belongs to the class-II aminoacyl-tRNA synthetase family. It depends on Zn(2+) as a cofactor.

It is found in the cytoplasm. It catalyses the reaction tRNA(Ala) + L-alanine + ATP = L-alanyl-tRNA(Ala) + AMP + diphosphate. Its function is as follows. Catalyzes the attachment of alanine to tRNA(Ala) in a two-step reaction: alanine is first activated by ATP to form Ala-AMP and then transferred to the acceptor end of tRNA(Ala). Also edits incorrectly charged Ser-tRNA(Ala) and Gly-tRNA(Ala) via its editing domain. This is Alanine--tRNA ligase from Bordetella bronchiseptica (strain ATCC BAA-588 / NCTC 13252 / RB50) (Alcaligenes bronchisepticus).